Reading from the N-terminus, the 695-residue chain is HIPL1 protein (695 aa).

The signal sequence occupies residues Met1–Ala23. 15 N-linked (GlcNAc...) asparagine glycosylation sites follow: Asn37, Asn67, Asn107, Asn113, Asn128, Asn151, Asn175, Asn190, Asn208, Asn337, Asn429, Asn511, Asn527, Asn641, and Asn648. Ser665 is lipidated: GPI-anchor amidated serine. Residues Ser666–Asn695 constitute a propeptide, removed in mature form.

It belongs to the PQQ oxidoreductase GdhB family. It depends on pyrroloquinoline quinone as a cofactor.

Its subcellular location is the cell membrane. The polypeptide is HIPL1 protein (HIPL1) (Arabidopsis thaliana (Mouse-ear cress)).